A 340-amino-acid polypeptide reads, in one-letter code: Protein-arginine kinase (340 aa).

Residues Val-21–Ala-242 enclose the Phosphagen kinase C-terminal domain. Residues Ser-24–Arg-28, His-79, Arg-113, Arg-164–Met-168, and Arg-195–Glu-200 each bind ATP.

It belongs to the ATP:guanido phosphotransferase family.

It catalyses the reaction L-arginyl-[protein] + ATP = N(omega)-phospho-L-arginyl-[protein] + ADP + H(+). Its function is as follows. Catalyzes the specific phosphorylation of arginine residues in proteins. The chain is Protein-arginine kinase from Listeria welshimeri serovar 6b (strain ATCC 35897 / DSM 20650 / CCUG 15529 / CIP 8149 / NCTC 11857 / SLCC 5334 / V8).